The primary structure comprises 352 residues: Phenylalanine--tRNA ligase alpha subunit (352 aa).

E258 contributes to the Mg(2+) binding site.

It belongs to the class-II aminoacyl-tRNA synthetase family. Phe-tRNA synthetase alpha subunit type 1 subfamily. In terms of assembly, tetramer of two alpha and two beta subunits. It depends on Mg(2+) as a cofactor.

Its subcellular location is the cytoplasm. The enzyme catalyses tRNA(Phe) + L-phenylalanine + ATP = L-phenylalanyl-tRNA(Phe) + AMP + diphosphate + H(+). The protein is Phenylalanine--tRNA ligase alpha subunit of Staphylococcus haemolyticus (strain JCSC1435).